The following is a 394-amino-acid chain: Dimethyladenosine transferase 2, mitochondrial (394 aa).

The transit peptide at 1-19 directs the protein to the mitochondrion; that stretch reads MWVPGAGIPSRLTLSAFTR. S-adenosyl-L-methionine is bound by residues valine 75, glutamate 123, and aspartate 149. The DNA-binding stretch occupies residues 326 to 327; the sequence is KR.

This sequence belongs to the class I-like SAM-binding methyltransferase superfamily. rRNA adenine N(6)-methyltransferase family. KsgA subfamily. As to quaternary structure, homodimer. Component of the mitochondrial transcription initiation complex, composed at least of TFB2M, TFAM and POLRMT. In this complex TFAM recruits POLRMT to the promoter whereas TFB2M induces structural changes in POLRMT to enable promoter opening and trapping of the DNA non-template strand. Interacts with mitochondrial RNA polymerase POLRMT. Interacts with TFAM.

The protein resides in the mitochondrion. The catalysed reaction is adenosine in rRNA + S-adenosyl-L-methionine = N(6)-methyladenosine in rRNA + S-adenosyl-L-homocysteine + H(+). Functionally, S-adenosyl-L-methionine-dependent rRNA methyltransferase which may methylate two specific adjacent adenosines in the loop of a conserved hairpin near the 3'-end of 12S mitochondrial rRNA. Component of the mitochondrial transcription initiation complex, composed at least of TFB2M, TFAM and POLRMT that is required for basal transcription of mitochondrial DNA. In this complex TFAM recruits POLRMT to a specific promoter whereas TFB2M induces structural changes in POLRMT to enable promoter opening and trapping of the DNA non-template strand. Stimulates transcription independently of the methyltransferase activity. The sequence is that of Dimethyladenosine transferase 2, mitochondrial from Bos taurus (Bovine).